The primary structure comprises 200 residues: NADH-quinone oxidoreductase subunit C (200 aa).

The protein belongs to the complex I 30 kDa subunit family. In terms of assembly, NDH-1 is composed of 14 different subunits. Subunits NuoB, C, D, E, F, and G constitute the peripheral sector of the complex.

The protein resides in the cell inner membrane. The enzyme catalyses a quinone + NADH + 5 H(+)(in) = a quinol + NAD(+) + 4 H(+)(out). NDH-1 shuttles electrons from NADH, via FMN and iron-sulfur (Fe-S) centers, to quinones in the respiratory chain. The immediate electron acceptor for the enzyme in this species is believed to be ubiquinone. Couples the redox reaction to proton translocation (for every two electrons transferred, four hydrogen ions are translocated across the cytoplasmic membrane), and thus conserves the redox energy in a proton gradient. The protein is NADH-quinone oxidoreductase subunit C of Rhizobium rhizogenes (strain K84 / ATCC BAA-868) (Agrobacterium radiobacter).